A 150-amino-acid chain; its full sequence is Placenta-specific protein 4 (150 aa).

As to expression, expressed in placental syncytiotrophoblast and choriocarcinoma cells.

This Homo sapiens (Human) protein is Placenta-specific protein 4 (PLAC4).